The chain runs to 321 residues: Cytochrome c biogenesis protein CcsA (321 aa).

7 helical membrane passes run 9–29 (ILTHISFSTISIVITIHLITL), 44–64 (GMIATFFSITGFLVSRWVSSG), 68–88 (LSNLYESLIFLSWTLYILHTI), 143–163 (MLLSYATLLCGSLLSAALLII), 225–245 (VISLGFTLLTVGILCGAVWAN), 259–273 (TWAFITWTIFAIYLH), and 288–308 (VASIGFLIIWICYFGINLLGI).

It belongs to the CcmF/CycK/Ccl1/NrfE/CcsA family. As to quaternary structure, may interact with Ccs1.

The protein localises to the plastid. Its subcellular location is the chloroplast thylakoid membrane. Functionally, required during biogenesis of c-type cytochromes (cytochrome c6 and cytochrome f) at the step of heme attachment. The chain is Cytochrome c biogenesis protein CcsA from Saccharum hybrid (Sugarcane).